A 282-amino-acid chain; its full sequence is Phosphatidylserine decarboxylase proenzyme (282 aa).

Catalysis depends on charge relay system; for autoendoproteolytic cleavage activity residues Asp88, His144, and Ser247. The Schiff-base intermediate with substrate; via pyruvic acid; for decarboxylase activity role is filled by Ser247. Ser247 is modified (pyruvic acid (Ser); by autocatalysis).

Belongs to the phosphatidylserine decarboxylase family. PSD-B subfamily. Prokaryotic type I sub-subfamily. In terms of assembly, heterodimer of a large membrane-associated beta subunit and a small pyruvoyl-containing alpha subunit. It depends on pyruvate as a cofactor. Post-translationally, is synthesized initially as an inactive proenzyme. Formation of the active enzyme involves a self-maturation process in which the active site pyruvoyl group is generated from an internal serine residue via an autocatalytic post-translational modification. Two non-identical subunits are generated from the proenzyme in this reaction, and the pyruvate is formed at the N-terminus of the alpha chain, which is derived from the carboxyl end of the proenzyme. The autoendoproteolytic cleavage occurs by a canonical serine protease mechanism, in which the side chain hydroxyl group of the serine supplies its oxygen atom to form the C-terminus of the beta chain, while the remainder of the serine residue undergoes an oxidative deamination to produce ammonia and the pyruvoyl prosthetic group on the alpha chain. During this reaction, the Ser that is part of the protease active site of the proenzyme becomes the pyruvoyl prosthetic group, which constitutes an essential element of the active site of the mature decarboxylase.

It is found in the cell membrane. The enzyme catalyses a 1,2-diacyl-sn-glycero-3-phospho-L-serine + H(+) = a 1,2-diacyl-sn-glycero-3-phosphoethanolamine + CO2. It participates in phospholipid metabolism; phosphatidylethanolamine biosynthesis; phosphatidylethanolamine from CDP-diacylglycerol: step 2/2. Functionally, catalyzes the formation of phosphatidylethanolamine (PtdEtn) from phosphatidylserine (PtdSer). The polypeptide is Phosphatidylserine decarboxylase proenzyme (Xanthomonas campestris pv. campestris (strain 8004)).